The primary structure comprises 853 residues: Neural cell adhesion molecule 1 (853 aa).

Positions Met1–Ser19 are cleaved as a signal peptide. Ig-like C2-type domains follow at residues Leu20–Asn111, Gln116–Gln205, Pro212–His300, Pro307–Gln412, and Pro415–Glu500. Residues Leu20 to Thr719 are Extracellular-facing. 2 disulfides stabilise this stretch: Cys41–Cys96 and Cys139–Cys189. Heparin is bound by residues Lys152–Arg156 and Lys161–Arg165. An N-linked (GlcNAc...) asparagine glycan is attached at Asn222. Cys235 and Cys286 are disulfide-bonded. Asn314, Asn346, Asn432, Asn458, and Asn487 each carry an N-linked (GlcNAc...) asparagine glycan. Cys328 and Cys394 are disulfide-bonded. Cysteines 435 and 488 form a disulfide. 2 Fibronectin type-III domains span residues Thr508–Val607 and Glu609–Pro704. The chain crosses the membrane as a helical span at residues Gly720 to Val737. The Cytoplasmic portion of the chain corresponds to Asp738 to Ala853. Residues Gly764–Ala853 are disordered. 2 stretches are compositionally biased toward basic and acidic residues: residues Lys766–Pro807 and Glu815–Thr829. A phosphoserine mark is found at Ser778 and Ser782. A compositionally biased stretch (polar residues) spans Thr838–Ala853.

In terms of assembly, interacts with MDK. Found in a complex with SLC39A6, SLC39A10 and with NCAM1; this complex controls NCAM1 phosphorylation and integration into focal adhesion complexes during epithelial-tomesenchymal transition. Interacts with synaptic plasticity regulator PANTS. Polysialylated by ST8SIA2 and ST8SIA4. Polysialylation modulates cell interactions by confering both attractive and repulsive properties that are highly regulated by ST8SIA2 and ST8SIA4. Polysialylation is formed on a-2,3-linked sialic acid of core glycans.

It is found in the cell membrane. This protein is a cell adhesion molecule involved in neuron-neuron adhesion, neurite fasciculation, outgrowth of neurites, etc. The polypeptide is Neural cell adhesion molecule 1 (Bos taurus (Bovine)).